A 704-amino-acid chain; its full sequence is Elongation factor G (704 aa).

Residues 8–290 (EKYRNIGICA…GVVRYLPAPN (283 aa)) enclose the tr-type G domain. GTP contacts are provided by residues 17–24 (AHVDAGKT), 88–92 (DTPGH), and 142–145 (NKMD).

Belongs to the TRAFAC class translation factor GTPase superfamily. Classic translation factor GTPase family. EF-G/EF-2 subfamily.

Its subcellular location is the cytoplasm. Functionally, catalyzes the GTP-dependent ribosomal translocation step during translation elongation. During this step, the ribosome changes from the pre-translocational (PRE) to the post-translocational (POST) state as the newly formed A-site-bound peptidyl-tRNA and P-site-bound deacylated tRNA move to the P and E sites, respectively. Catalyzes the coordinated movement of the two tRNA molecules, the mRNA and conformational changes in the ribosome. The chain is Elongation factor G from Francisella tularensis subsp. holarctica (strain FTNF002-00 / FTA).